The sequence spans 435 residues: NAD-specific glutamate dehydrogenase A (435 aa).

The segment at 1–28 is disordered; the sequence is MTMASKSDSTHDESGDEAADSTEPESAL. Residues 14 to 23 are compositionally biased toward acidic residues; sequence SGDEAADSTE. Residue K126 is part of the active site.

It belongs to the Glu/Leu/Phe/Val dehydrogenases family. In terms of assembly, homohexamer. Post-translationally, the N-terminus is blocked.

The catalysed reaction is L-glutamate + NAD(+) + H2O = 2-oxoglutarate + NH4(+) + NADH + H(+). With respect to regulation, inhibited by ethanol, acetone, acetonitrile and 2-propanol (65 to 70% inhibition) and to a lesser extent by methanol and dimethyl formamide (26 and 49 % inhibition respectively). No effect of glycerol or DMSO. This Halobacterium salinarum (Halobacterium halobium) protein is NAD-specific glutamate dehydrogenase A (gdhX).